We begin with the raw amino-acid sequence, 61 residues long: Large ribosomal subunit protein uL30 (61 aa).

This sequence belongs to the universal ribosomal protein uL30 family. Part of the 50S ribosomal subunit.

In Mycolicibacterium gilvum (strain PYR-GCK) (Mycobacterium gilvum (strain PYR-GCK)), this protein is Large ribosomal subunit protein uL30.